The chain runs to 246 residues: 1-(5-phosphoribosyl)-5-[(5-phosphoribosylamino)methylideneamino] imidazole-4-carboxamide isomerase (246 aa).

D8 serves as the catalytic Proton acceptor. The Proton donor role is filled by D130.

Belongs to the HisA/HisF family.

It is found in the cytoplasm. It carries out the reaction 1-(5-phospho-beta-D-ribosyl)-5-[(5-phospho-beta-D-ribosylamino)methylideneamino]imidazole-4-carboxamide = 5-[(5-phospho-1-deoxy-D-ribulos-1-ylimino)methylamino]-1-(5-phospho-beta-D-ribosyl)imidazole-4-carboxamide. Its pathway is amino-acid biosynthesis; L-histidine biosynthesis; L-histidine from 5-phospho-alpha-D-ribose 1-diphosphate: step 4/9. This Halorhodospira halophila (strain DSM 244 / SL1) (Ectothiorhodospira halophila (strain DSM 244 / SL1)) protein is 1-(5-phosphoribosyl)-5-[(5-phosphoribosylamino)methylideneamino] imidazole-4-carboxamide isomerase.